A 366-amino-acid polypeptide reads, in one-letter code: S-adenosylmethionine synthase 1 (366 aa).

Glu18 provides a ligand contact to K(+). The L-methionine site is built by Glu31 and Gln74. ATP contacts are provided by residues 142–144 (DGN), 210–213 (SGRF), Asp221, 227–228 (RK), Ala244, Lys248, and Lys252. Asp221 contributes to the L-methionine binding site. An L-methionine-binding site is contributed by Lys252.

The protein belongs to the AdoMet synthase family. Homotetramer. The cofactor is Mn(2+). Mg(2+) is required as a cofactor. Requires Co(2+) as cofactor. It depends on K(+) as a cofactor.

It is found in the cytoplasm. It carries out the reaction L-methionine + ATP + H2O = S-adenosyl-L-methionine + phosphate + diphosphate. The protein operates within amino-acid biosynthesis; S-adenosyl-L-methionine biosynthesis; S-adenosyl-L-methionine from L-methionine: step 1/1. Catalyzes the formation of S-adenosylmethionine from methionine and ATP. The reaction comprises two steps that are both catalyzed by the same enzyme: formation of S-adenosylmethionine (AdoMet) and triphosphate, and subsequent hydrolysis of the triphosphate. The sequence is that of S-adenosylmethionine synthase 1 (SAMS1) from Pisum sativum (Garden pea).